A 319-amino-acid chain; its full sequence is MTILAWCIAWVLDFIIGDPQHWPHPVRWIGRLITFVQRIVRRYCPGDKALRIGGGVMWVVVVGVTWGVAWGVLALAQRIHPWFGWSVEVWMIFTTLAGRSLARAAQEVERPLRENDLAESRIKLSWIVGRDTSQLQPAQIYRAVVETVAENTVDGIIAPLFFLFLGGAPLAMAYKAVNTLDSMVGYKHEKYRAIGMVSARMDDVANYLPARLSWLLLGIAAGLCRLSGWRALRIGWRDRYNHSSPNCAWSEACVAGALGIQLGGPNNYFGERVDKPWIGDAQRGISVDDISRTIRLMWVASTLALALFIAARCGLSGVA.

Helical transmembrane passes span 52–74 (IGGG…GVLA), 79–101 (IHPW…GRSL), 155–177 (GIIA…YKAV), 207–229 (YLPA…LSGW), and 296–318 (LMWV…LSGV).

It belongs to the CobD/CbiB family.

It is found in the cell membrane. It functions in the pathway cofactor biosynthesis; adenosylcobalamin biosynthesis; adenosylcobalamin from cob(II)yrinate a,c-diamide: step 4/7. In terms of biological role, converts cobyric acid to cobinamide by the addition of aminopropanol on the F carboxylic group. However, the true cosubstrate could be (R)-1-amino-2-propanol O-2-phosphate, leading to cobinamide phosphate. This is Cobalamin biosynthesis protein CbiB from Salmonella typhi.